The sequence spans 341 residues: L-threonine 3-dehydrogenase (341 aa).

Cys-38 is a binding site for Zn(2+). Catalysis depends on charge relay system residues Thr-40 and His-43. Zn(2+)-binding residues include His-63, Glu-64, Cys-93, Cys-96, Cys-99, and Cys-107. NAD(+)-binding positions include Ile-175, Asp-195, Arg-200, 262-264 (LGI), and 286-287 (IY).

Belongs to the zinc-containing alcohol dehydrogenase family. As to quaternary structure, homotetramer. It depends on Zn(2+) as a cofactor.

Its subcellular location is the cytoplasm. The catalysed reaction is L-threonine + NAD(+) = (2S)-2-amino-3-oxobutanoate + NADH + H(+). It participates in amino-acid degradation; L-threonine degradation via oxydo-reductase pathway; glycine from L-threonine: step 1/2. Catalyzes the NAD(+)-dependent oxidation of L-threonine to 2-amino-3-ketobutyrate. The sequence is that of L-threonine 3-dehydrogenase from Escherichia coli O127:H6 (strain E2348/69 / EPEC).